A 96-amino-acid polypeptide reads, in one-letter code: Defensin-like protein 69 (96 aa).

Positions 1–19 (MGSSKLLVAFTLIVMMTIS) are cleaved as a signal peptide. 4 disulfides stabilise this stretch: C37-C86, C41-C64, C50-C84, and C54-C85.

This sequence belongs to the DEFL family.

The protein localises to the secreted. The protein is Defensin-like protein 69 of Arabidopsis thaliana (Mouse-ear cress).